The following is a 455-amino-acid chain: EP1-like glycoprotein 2 (455 aa).

Positions 1-22 (MSRFAILVTLALAIATVSVVIA) are cleaved as a signal peptide. Residues 44-163 (EYDASYRFIE…NGKFVWQSFD (120 aa)) enclose the Bulb-type lectin domain. N-linked (GlcNAc...) asparagine glycosylation is found at Asn56, Asn106, Asn191, Asn211, Asn241, and Asn289. Cys374 carries the post-translational modification S-nitrosocysteine. One can recognise a PAN domain in the interval 374-455 (CSGVKGKTVN…NTSSVAYIKY (82 aa)). 2 disulfide bridges follow: Cys410/Cys432 and Cys414/Cys420. N-linked (GlcNAc...) asparagine glycosylation occurs at Asn446.

It is found in the secreted. It localises to the cell wall. In Arabidopsis thaliana (Mouse-ear cress), this protein is EP1-like glycoprotein 2.